Reading from the N-terminus, the 786-residue chain is Pentatricopeptide repeat-containing protein At2g22070 (786 aa).

PPR repeat units follow at residues 48 to 78, 79 to 109, 110 to 144, 145 to 179, 180 to 214, 215 to 241, 242 to 276, 278 to 312, 313 to 347, 350 to 376, 377 to 411, 412 to 446, 447 to 477, 479 to 513, 514 to 548, and 550 to 580; these read SVYL…MPLR, TAFS…LPQR, DSVS…GIEP, TQFT…GLRG, NVSV…DISS, WNAM…MAER, DIVT…SLLS, DRFT…GFDI, SGIV…DLKI, FTAL…LKDR, DVVA…GQRP, NSYT…GEIY, SVSV…IRCE, DTVS…GLRP, DHIT…DKII, and TLSH…MPIE. A type E motif region spans residues 585–660; it reads TWGSLLSACR…EQGFSWIEVK (76 aa). Positions 661–691 are type E(+) motif; that stretch reads HKVHVFGVEDGTHPEKNEIYMTMKKIWDEIK. The type DYW motif stretch occupies residues 692–786; it reads KMGYVPDTAS…DGFCSCRDYW (95 aa).

This sequence belongs to the PPR family. PCMP-H subfamily.

The chain is Pentatricopeptide repeat-containing protein At2g22070 (PCMP-H41) from Arabidopsis thaliana (Mouse-ear cress).